The chain runs to 386 residues: Succinate--CoA ligase [ADP-forming] subunit beta (386 aa).

The 236-residue stretch at 9-244 (KEILRKYGVP…HDEEDPLETR (236 aa)) folds into the ATP-grasp domain. Residues Lys46, 53–55 (GRG), Glu99, Cys102, and Glu107 each bind ATP. 2 residues coordinate Mg(2+): Asn199 and Asp213. Residues Asn264 and 321-323 (GIM) each bind substrate.

It belongs to the succinate/malate CoA ligase beta subunit family. As to quaternary structure, heterotetramer of two alpha and two beta subunits. Mg(2+) serves as cofactor.

The enzyme catalyses succinate + ATP + CoA = succinyl-CoA + ADP + phosphate. It carries out the reaction GTP + succinate + CoA = succinyl-CoA + GDP + phosphate. It functions in the pathway carbohydrate metabolism; tricarboxylic acid cycle; succinate from succinyl-CoA (ligase route): step 1/1. Succinyl-CoA synthetase functions in the citric acid cycle (TCA), coupling the hydrolysis of succinyl-CoA to the synthesis of either ATP or GTP and thus represents the only step of substrate-level phosphorylation in the TCA. The beta subunit provides nucleotide specificity of the enzyme and binds the substrate succinate, while the binding sites for coenzyme A and phosphate are found in the alpha subunit. The protein is Succinate--CoA ligase [ADP-forming] subunit beta of Rickettsia prowazekii (strain Madrid E).